Consider the following 349-residue polypeptide: MTDSKDHHVAGRKLDHLRALDDDADIDRGDSGFDRIALTHRALPEVDFDAIDTATSFLGRELSFPLLISSMTGGTGEEIERINRNLAAGAEEARVAMAVGSQRVMFTDPSARASFDLRAHAPTVPLLANIGAVQLNMGLGLKECLAAIEVLQADGLYLHLNPLQEAVQPEGDRDFADLGSKIAAIARDVPVPVLLKEVGCGLSAADIAIGLRAGIRHFDVAGRGGTSWSRIEYRRRQRADDDLGLVFQDWGLQTVDALREARPALAAHDGTSVLIASGGIRNGVDMAKCVILGADMCGVAAPLLKAAQNSREAVVSAIRKLHLEFRTAMFLLGCGTLADLKDNSSLIRQ.

12–13 contacts substrate; that stretch reads RK. Residues Ser-69, 70–72, Ser-101, and Asn-129 contribute to the FMN site; that span reads SMT. Residue 101–103 participates in substrate binding; sequence SQR. Gln-164 is a binding site for substrate. Glu-165 serves as a coordination point for Mg(2+). Residues Lys-196, Thr-226, 279–281, and 300–301 contribute to the FMN site; these read GIR and AA.

It belongs to the IPP isomerase type 2 family. In terms of assembly, homooctamer. Dimer of tetramers. FMN serves as cofactor. It depends on NADPH as a cofactor. Mg(2+) is required as a cofactor.

It is found in the cytoplasm. It catalyses the reaction isopentenyl diphosphate = dimethylallyl diphosphate. Functionally, involved in the biosynthesis of isoprenoids. Catalyzes the 1,3-allylic rearrangement of the homoallylic substrate isopentenyl (IPP) to its allylic isomer, dimethylallyl diphosphate (DMAPP). The chain is Isopentenyl-diphosphate delta-isomerase from Paracoccus zeaxanthinifaciens.